The following is a 520-amino-acid chain: D-aminopeptidase (520 aa).

The Nucleophile role is filled by Ser-62. The Proton donor/acceptor role is filled by Lys-65. Residues 477–487 (QRSMDAPSPGE) are important for specificity. Asp-481 provides a ligand contact to substrate.

Belongs to the peptidase S12 family. Homodimer.

The enzyme catalyses Release of an N-terminal D-amino acid from a peptide, Xaa-|-Yaa-, in which Xaa is preferably D-Ala, D-Ser or D-Thr. D-amino acid amides and methyl esters also are hydrolyzed, as is glycine amide.. With respect to regulation, inhibited by beta-lactam compounds such as 6-aminopenicillic acid, 7-aminocephalosporanic acid, benzylpenicillin and ampicillin. Inhibited by p-chloromercuribenzoate. Hydrolyzes N-terminal residues in D-amino acid-containing peptides. The polypeptide is D-aminopeptidase (dap) (Brucella anthropi (Ochrobactrum anthropi)).